A 316-amino-acid polypeptide reads, in one-letter code: Pantothenate kinase (316 aa).

95–102 serves as a coordination point for ATP; it reads GSVAVGKS.

This sequence belongs to the prokaryotic pantothenate kinase family.

It localises to the cytoplasm. The enzyme catalyses (R)-pantothenate + ATP = (R)-4'-phosphopantothenate + ADP + H(+). It functions in the pathway cofactor biosynthesis; coenzyme A biosynthesis; CoA from (R)-pantothenate: step 1/5. This chain is Pantothenate kinase, found in Salmonella agona (strain SL483).